A 702-amino-acid chain; its full sequence is Transposon Tn7 transposition protein TnsB (702 aa).

Positions 1–139 are DNA-binding domain 1 (DBD1); it reads MWQINEVVLF…GQTPNALIPD (139 aa). Residues 105 to 124 constitute a DNA-binding region (H-T-H motif); sequence VEHVVQEHKVTKATVYKLLR. A disordered region spans residues 137 to 160; the sequence is IPDYKNSGAPGERRSATGTAKIGR. The segment at 140–172 is linker 1; it reads YKNSGAPGERRSATGTAKIGRAREYGKGEGTKV. The DNA-binding domain 2 (DBD2) stretch occupies residues 173 to 233; that stretch reads TPEIERLFRL…QFRYFYDREY (61 aa). The linker 2 stretch occupies residues 234–267; sequence PKAQRLKSRVKAGVYKKDVRPLSSTATSQALGPG. The 219-residue stretch at 262-480 folds into the Integrase catalytic domain; it reads QALGPGSRYE…IPVQLWQWGM (219 aa). The segment at 268 to 582 is catalytic domain (CD); the sequence is SRYEIDATIA…RSRQFKGLSF (315 aa). The segment at 589–702 is C-terminal domain; that stretch reads QAQEKHNKAN…FQDPPEKDES (114 aa). The interval 623-702 is disordered; it reads KLTPSTTEPK…FQDPPEKDES (80 aa).

Heteromer with TnsA.

Sequence-specific, DNA-binding protein required for Tn7 transposition. Recognizes sequences necessary for recombination at both left and right ends of Tn7 and, together with TnsA, forms the transposase. TnsB executes the 3'-DNA strand breakage and joining reactions. TnsB binding introduces DNA bending. There are 3 DNA-binding sites in the left and 4 in the right end of Tn7; as TnsB levels increase more TnsB is bound, suggesting high protein levels contribute to transposon immunity. Binding of TnsB to the transposon right end represses expression of the downstream transposition genes. TnsABC + TnsD promote high-frequency insertion of Tn7 into a specific target site known as att-Tn7 whereas TnsABC + TnsE promote low-frequency insertion into many different sites. In Escherichia coli, this protein is Transposon Tn7 transposition protein TnsB.